A 676-amino-acid chain; its full sequence is DNA ligase (676 aa).

Residues 39 to 43 (DYVYD), 88 to 91 (SLND), and glutamate 118 each bind NAD(+). The N6-AMP-lysine intermediate role is filled by lysine 120. Arginine 141, glutamate 175, lysine 291, and lysine 315 together coordinate NAD(+). Residues cysteine 409, cysteine 412, cysteine 427, and cysteine 432 each coordinate Zn(2+). The 82-residue stretch at 595–676 (EVESPFKDKT…MVDALDASHF (82 aa)) folds into the BRCT domain.

This sequence belongs to the NAD-dependent DNA ligase family. LigA subfamily. Requires Mg(2+) as cofactor. It depends on Mn(2+) as a cofactor.

The catalysed reaction is NAD(+) + (deoxyribonucleotide)n-3'-hydroxyl + 5'-phospho-(deoxyribonucleotide)m = (deoxyribonucleotide)n+m + AMP + beta-nicotinamide D-nucleotide.. Its function is as follows. DNA ligase that catalyzes the formation of phosphodiester linkages between 5'-phosphoryl and 3'-hydroxyl groups in double-stranded DNA using NAD as a coenzyme and as the energy source for the reaction. It is essential for DNA replication and repair of damaged DNA. This is DNA ligase from Enterococcus faecalis (strain ATCC 700802 / V583).